Reading from the N-terminus, the 187-residue chain is Orotate phosphoribosyltransferase (187 aa).

5-phospho-alpha-D-ribose 1-diphosphate-binding positions include R103, K104, K107, and 129-137 (EDVTTSGGS). T133 and R161 together coordinate orotate.

The protein belongs to the purine/pyrimidine phosphoribosyltransferase family. PyrE subfamily. Homodimer. Requires Mg(2+) as cofactor.

It carries out the reaction orotidine 5'-phosphate + diphosphate = orotate + 5-phospho-alpha-D-ribose 1-diphosphate. It participates in pyrimidine metabolism; UMP biosynthesis via de novo pathway; UMP from orotate: step 1/2. Catalyzes the transfer of a ribosyl phosphate group from 5-phosphoribose 1-diphosphate to orotate, leading to the formation of orotidine monophosphate (OMP). In Methanosarcina mazei (strain ATCC BAA-159 / DSM 3647 / Goe1 / Go1 / JCM 11833 / OCM 88) (Methanosarcina frisia), this protein is Orotate phosphoribosyltransferase.